Consider the following 274-residue polypeptide: Nuclease (274 aa).

A signal peptide spans 1–24 (MGICGKLGVAALVALIVGCSPVQS). The active-site Proton acceptor is the His124. Asn155, Asp246, Glu249, Asp255, Phe256, Gln265, and Glu269 together coordinate Mn(2+).

The protein belongs to the DNA/RNA non-specific endonuclease family. In terms of assembly, monomer. Mn(2+) is required as a cofactor. Mg(2+) serves as cofactor. It depends on Ca(2+) as a cofactor. The cofactor is Co(2+). In terms of processing, the N-terminus is blocked.

It is found in the periplasm. In terms of biological role, catalyzes the degradation of both RNA and DNA; has the potential to act as an endonuclease. The chain is Nuclease (nucA) from Nostoc sp. (strain PCC 7120 / SAG 25.82 / UTEX 2576).